We begin with the raw amino-acid sequence, 91 residues long: Acylphosphatase (91 aa).

The Acylphosphatase-like domain maps to 4–91 (RYLIKVLGRV…DNEKSFKIVY (88 aa)). Residues Arg-19 and Asn-37 contribute to the active site.

This sequence belongs to the acylphosphatase family.

It catalyses the reaction an acyl phosphate + H2O = a carboxylate + phosphate + H(+). The protein is Acylphosphatase (acyP) of Clostridium acetobutylicum (strain ATCC 824 / DSM 792 / JCM 1419 / IAM 19013 / LMG 5710 / NBRC 13948 / NRRL B-527 / VKM B-1787 / 2291 / W).